The chain runs to 333 residues: Acetyl-coenzyme A carboxylase carboxyl transferase subunit alpha (333 aa).

The region spanning 48–308 is the CoA carboxyltransferase C-terminal domain; sequence ALEVKVETLR…KEMLIEELRI (261 aa).

It belongs to the AccA family. Acetyl-CoA carboxylase is a heterohexamer composed of biotin carboxyl carrier protein (AccB), biotin carboxylase (AccC) and two subunits each of ACCase subunit alpha (AccA) and ACCase subunit beta (AccD).

The protein resides in the cytoplasm. The catalysed reaction is N(6)-carboxybiotinyl-L-lysyl-[protein] + acetyl-CoA = N(6)-biotinyl-L-lysyl-[protein] + malonyl-CoA. It participates in lipid metabolism; malonyl-CoA biosynthesis; malonyl-CoA from acetyl-CoA: step 1/1. In terms of biological role, component of the acetyl coenzyme A carboxylase (ACC) complex. First, biotin carboxylase catalyzes the carboxylation of biotin on its carrier protein (BCCP) and then the CO(2) group is transferred by the carboxyltransferase to acetyl-CoA to form malonyl-CoA. In Chlorobium phaeobacteroides (strain DSM 266 / SMG 266 / 2430), this protein is Acetyl-coenzyme A carboxylase carboxyl transferase subunit alpha.